We begin with the raw amino-acid sequence, 103 residues long: Sec-independent protein translocase protein TatA (103 aa).

A helical transmembrane segment spans residues Met1–Phe21. The tract at residues Glu48–Lys103 is disordered. The span at Asp59–Leu74 shows a compositional bias: polar residues.

The protein belongs to the TatA/E family. In terms of assembly, the Tat system comprises two distinct complexes: a TatABC complex, containing multiple copies of TatA, TatB and TatC subunits, and a separate TatA complex, containing only TatA subunits. Substrates initially bind to the TatABC complex, which probably triggers association of the separate TatA complex to form the active translocon.

The protein resides in the cell inner membrane. Functionally, part of the twin-arginine translocation (Tat) system that transports large folded proteins containing a characteristic twin-arginine motif in their signal peptide across membranes. TatA could form the protein-conducting channel of the Tat system. The protein is Sec-independent protein translocase protein TatA of Bartonella tribocorum (strain CIP 105476 / IBS 506).